The primary structure comprises 446 residues: Probable 1,4-beta-D-glucan cellobiohydrolase A (446 aa).

An N-terminal signal peptide occupies residues 1–17 (MYQRALLFSALLSVSRA). N-linked (GlcNAc...) asparagine glycosylation is present at Asn-81. The active-site Nucleophile is the Glu-226. Glu-231 functions as the Proton donor in the catalytic mechanism. Residues Asn-284 and Asn-333 are each glycosylated (N-linked (GlcNAc...) asparagine). Residues 399-420 (TDADPSQPGVARGTCEQGAGDP) are disordered.

It belongs to the glycosyl hydrolase 7 (cellulase C) family.

It is found in the secreted. The catalysed reaction is Hydrolysis of (1-&gt;4)-beta-D-glucosidic linkages in cellulose and cellotetraose, releasing cellobiose from the non-reducing ends of the chains.. The biological conversion of cellulose to glucose generally requires three types of hydrolytic enzymes: (1) Endoglucanases which cut internal beta-1,4-glucosidic bonds; (2) Exocellobiohydrolases that cut the disaccharide cellobiose from the non-reducing end of the cellulose polymer chain; (3) Beta-1,4-glucosidases which hydrolyze the cellobiose and other short cello-oligosaccharides to glucose. The polypeptide is Probable 1,4-beta-D-glucan cellobiohydrolase A (cbhA) (Emericella nidulans (strain FGSC A4 / ATCC 38163 / CBS 112.46 / NRRL 194 / M139) (Aspergillus nidulans)).